Consider the following 187-residue polypeptide: Shikimate kinase (187 aa).

18–23 (GCGKST) is an ATP binding site. Ser-22 is a Mg(2+) binding site. Substrate-binding residues include Asp-40, Arg-64, and Gly-86. Arg-128 provides a ligand contact to ATP. Arg-147 contributes to the substrate binding site. Residue Arg-164 participates in ATP binding.

It belongs to the shikimate kinase family. Monomer. Requires Mg(2+) as cofactor.

The protein resides in the cytoplasm. The enzyme catalyses shikimate + ATP = 3-phosphoshikimate + ADP + H(+). Its pathway is metabolic intermediate biosynthesis; chorismate biosynthesis; chorismate from D-erythrose 4-phosphate and phosphoenolpyruvate: step 5/7. Functionally, catalyzes the specific phosphorylation of the 3-hydroxyl group of shikimic acid using ATP as a cosubstrate. The protein is Shikimate kinase of Rhodopirellula baltica (strain DSM 10527 / NCIMB 13988 / SH1).